A 283-amino-acid polypeptide reads, in one-letter code: tRNA pseudouridine synthase A (283 aa).

Asp52 acts as the Nucleophile in catalysis. Tyr148 provides a ligand contact to substrate.

The protein belongs to the tRNA pseudouridine synthase TruA family. Homodimer.

The catalysed reaction is uridine(38/39/40) in tRNA = pseudouridine(38/39/40) in tRNA. Formation of pseudouridine at positions 38, 39 and 40 in the anticodon stem and loop of transfer RNAs. This is tRNA pseudouridine synthase A from Orientia tsutsugamushi (strain Ikeda) (Rickettsia tsutsugamushi).